The following is a 170-amino-acid chain: Allophycocyanin subunit beta-18 (170 aa).

N74 carries the post-translational modification N4-methylasparagine. Residue C84 coordinates (2R,3E)-phycocyanobilin.

The protein belongs to the phycobiliprotein family. In terms of assembly, heterodimer of an alpha and a beta chain. Contains one covalently linked bilin chromophore.

It localises to the plastid. Its subcellular location is the chloroplast thylakoid membrane. Functionally, light-harvesting photosynthetic bile pigment-protein from the phycobiliprotein complex. Allophycocyanin has a maximum absorption at approximately 650 nanometers. This chain is Allophycocyanin subunit beta-18 (apcF), found in Cyanidium caldarium (Red alga).